The primary structure comprises 438 residues: Phosphoribosylamine--glycine ligase (438 aa).

One can recognise an ATP-grasp domain in the interval 107–319 (RKLFEDYDIP…LAKISKQIVD (213 aa)). 134–197 (IDNFDEPVVV…EELLLGEEYT (64 aa)) is a binding site for ATP. The Mg(2+) site is built by Gln277, Glu289, and Asn291. Residues Gln277, Glu289, and Asn291 each contribute to the Mn(2+) site.

It belongs to the GARS family. Mg(2+) serves as cofactor. Mn(2+) is required as a cofactor.

It carries out the reaction 5-phospho-beta-D-ribosylamine + glycine + ATP = N(1)-(5-phospho-beta-D-ribosyl)glycinamide + ADP + phosphate + H(+). It functions in the pathway purine metabolism; IMP biosynthesis via de novo pathway; N(1)-(5-phospho-D-ribosyl)glycinamide from 5-phospho-alpha-D-ribose 1-diphosphate: step 2/2. The polypeptide is Phosphoribosylamine--glycine ligase (Methanosphaera stadtmanae (strain ATCC 43021 / DSM 3091 / JCM 11832 / MCB-3)).